The sequence spans 421 residues: Histidine--tRNA ligase (421 aa).

This sequence belongs to the class-II aminoacyl-tRNA synthetase family. In terms of assembly, homodimer.

It localises to the cytoplasm. It catalyses the reaction tRNA(His) + L-histidine + ATP = L-histidyl-tRNA(His) + AMP + diphosphate + H(+). The polypeptide is Histidine--tRNA ligase (Francisella tularensis subsp. holarctica (strain OSU18)).